The following is a 178-amino-acid chain: Fatty-acid and retinol-binding protein 1 (178 aa).

Residues 1–16 (MYHQLILLALIGTIMA) form the signal peptide. Coiled-coil stretches lie at residues 67–89 (DAAL…ELRN) and 129–154 (IKQA…LKVT).

This sequence belongs to the fatty-acid and retinol-binding protein (FARBP) family. In terms of processing, not glycosylated.

The protein resides in the secreted. Its function is as follows. Binds retinol and different fatty acids. The protein is Fatty-acid and retinol-binding protein 1 of Loa loa (Eye worm).